Here is a 90-residue protein sequence, read N- to C-terminus: MTSKTVFQNAFKTFLDFAINSLPSTQGGLNITATAPGGVGQRPFTNKAGVLKLIFVSASSLYIGGLIAHKGASYLEENEIFVPTDEDDDD.

The chain crosses the membrane as a helical span at residues 49–68 (GVLKLIFVSASSLYIGGLIA).

This sequence belongs to the SMDT1/EMRE family.

The protein resides in the mitochondrion inner membrane. Functionally, essential regulatory subunit of the mitochondrial calcium uniporter (mcu-1) channel, a protein that mediates calcium uptake into mitochondria. This is Essential MCU regulator, mitochondrial from Caenorhabditis elegans.